The primary structure comprises 97 residues: Putative defensin-like protein 237 (97 aa).

Positions 1–23 (MRHATSPIVFCFLIFLVMNHVKG) are cleaved as a signal peptide. Intrachain disulfides connect Cys30/Cys94, Cys40/Cys71, Cys48/Cys84, and Cys69/Cys86.

This sequence belongs to the DEFL family.

It localises to the secreted. The sequence is that of Putative defensin-like protein 237 (SCRL21) from Arabidopsis thaliana (Mouse-ear cress).